Reading from the N-terminus, the 535-residue chain is Bifunctional purine biosynthesis protein PurH (535 aa).

Residues 1 to 145 form the MGS-like domain; the sequence is MAQTALISVS…KNWKDVGVLT (145 aa).

Belongs to the PurH family.

The catalysed reaction is (6R)-10-formyltetrahydrofolate + 5-amino-1-(5-phospho-beta-D-ribosyl)imidazole-4-carboxamide = 5-formamido-1-(5-phospho-D-ribosyl)imidazole-4-carboxamide + (6S)-5,6,7,8-tetrahydrofolate. The enzyme catalyses IMP + H2O = 5-formamido-1-(5-phospho-D-ribosyl)imidazole-4-carboxamide. It functions in the pathway purine metabolism; IMP biosynthesis via de novo pathway; 5-formamido-1-(5-phospho-D-ribosyl)imidazole-4-carboxamide from 5-amino-1-(5-phospho-D-ribosyl)imidazole-4-carboxamide (10-formyl THF route): step 1/1. The protein operates within purine metabolism; IMP biosynthesis via de novo pathway; IMP from 5-formamido-1-(5-phospho-D-ribosyl)imidazole-4-carboxamide: step 1/1. This is Bifunctional purine biosynthesis protein PurH from Variovorax paradoxus (strain S110).